We begin with the raw amino-acid sequence, 155 residues long: Small ribosomal subunit protein uS17 (155 aa).

This sequence belongs to the universal ribosomal protein uS17 family. As to quaternary structure, component of the small ribosomal subunit. Mature ribosomes consist of a small (40S) and a large (60S) subunit. The 40S subunit contains about 32 different proteins and 1 molecule of RNA (18S). The 60S subunit contains 45 different proteins and 3 molecules of RNA (25S, 5.8S and 5S).

The protein resides in the cytoplasm. Its function is as follows. Component of the ribosome, a large ribonucleoprotein complex responsible for the synthesis of proteins in the cell. The small ribosomal subunit (SSU) binds messenger RNAs (mRNAs) and translates the encoded message by selecting cognate aminoacyl-transfer RNA (tRNA) molecules. The large subunit (LSU) contains the ribosomal catalytic site termed the peptidyl transferase center (PTC), which catalyzes the formation of peptide bonds, thereby polymerizing the amino acids delivered by tRNAs into a polypeptide chain. The nascent polypeptides leave the ribosome through a tunnel in the LSU and interact with protein factors that function in enzymatic processing, targeting, and the membrane insertion of nascent chains at the exit of the ribosomal tunnel. This Candida albicans (strain SC5314 / ATCC MYA-2876) (Yeast) protein is Small ribosomal subunit protein uS17.